A 202-amino-acid polypeptide reads, in one-letter code: ATP-dependent Clp protease proteolytic subunit (202 aa).

Serine 106 serves as the catalytic Nucleophile. Residue histidine 131 is part of the active site.

Belongs to the peptidase S14 family. Fourteen ClpP subunits assemble into 2 heptameric rings which stack back to back to give a disk-like structure with a central cavity, resembling the structure of eukaryotic proteasomes.

The protein localises to the cytoplasm. The catalysed reaction is Hydrolysis of proteins to small peptides in the presence of ATP and magnesium. alpha-casein is the usual test substrate. In the absence of ATP, only oligopeptides shorter than five residues are hydrolyzed (such as succinyl-Leu-Tyr-|-NHMec, and Leu-Tyr-Leu-|-Tyr-Trp, in which cleavage of the -Tyr-|-Leu- and -Tyr-|-Trp bonds also occurs).. Its function is as follows. Cleaves peptides in various proteins in a process that requires ATP hydrolysis. Has a chymotrypsin-like activity. Plays a major role in the degradation of misfolded proteins. The chain is ATP-dependent Clp protease proteolytic subunit from Shewanella sp. (strain W3-18-1).